We begin with the raw amino-acid sequence, 426 residues long: MSKKSVLITSLMLFSMFFGAGNLIFPPMLGLSAGTNYLPAILGFLATSVLLPVLAIIAVVLSGENVKDMASRGGKIFGLVFPIAAYLSIGAFYALPRTGAVSYSTAVGVDNALYSGLFNFVFFAVALALSWNPNGIADKLGKWLTPALLTLIVVLVVLSVAKLDGTPGEPSSAYAQQPAGAGLLEGYMTMDAIAALAFGIVVISAFKYQKVNKVRTATVVSAFIAGILLALVYLGLGSIGQVVNGEFADGTAILNYAALSTMGQAGRIMFVAILILACMTTAVGLISATSEFFNSLLPGVKYHVWATVFALISFGVATMGLDTVLAVAAPVISFIYPSAITLVFLSLIEPLLFRLKWTYLFGIWTAVVWALFMSIPALNPFIEWAPLHSMSLGWVVPVLVASAIGLAIDWNKKGAQSVAKKESISV.

A run of 12 helical transmembrane segments spans residues 11-31 (LMLF…MLGL), 41-61 (ILGF…AVVL), 76-96 (IFGL…YALP), 111-131 (NALY…ALSW), 140-160 (LGKW…VLSV), 186-206 (GYMT…ISAF), 219-239 (VVSA…LGSI), 268-288 (IMFV…LISA), 296-316 (LLPG…SFGV), 324-344 (VLAV…TLVF), 358-378 (TYLF…IPAL), and 390-410 (MSLG…AIDW).

The protein belongs to the branched chain amino acid transporter family.

It is found in the cell membrane. Its function is as follows. Branched chain amino acid transport system, which transports isoleucine. The protein is Branched-chain amino acid permease BrnQ of Corynebacterium glutamicum (strain ATCC 13032 / DSM 20300 / JCM 1318 / BCRC 11384 / CCUG 27702 / LMG 3730 / NBRC 12168 / NCIMB 10025 / NRRL B-2784 / 534).